A 721-amino-acid polypeptide reads, in one-letter code: Protein mu-NS (721 aa).

Residues 1 to 13 are interaction with sigma-NS; that stretch reads MASFKGFSVNTVP. Positions 1-38 are RNA-binding; the sequence is MASFKGFSVNTVPVSKAKRDISSLAATPGIRSQPFTPS. Residues 14–40 are interaction with mu-2; the sequence is VSKAKRDISSLAATPGIRSQPFTPSVD. The interval 471-721 is involved in the formation of factory-like inclusions; sequence SSDMVDGIKL…IDFSVPTDEL (251 aa). Coiled-coil stretches lie at residues 523 to 560 and 628 to 686; these read LLSQLRELSSEVTRLQMELSRTQSLNAQLEADAKSAQA and QMNG…NQRQ.

Belongs to the orthoreovirus mu-NS protein family. As to quaternary structure, interacts with mu-2. Interacts with sigma-NS; in viral factories. Interacts with the inner capsid proteins lambda-1 and sigma-2, and outer capsid protein lambda-2; in viral factories. The N-terminus is blocked.

It is found in the host cytoplasm. In terms of biological role, non-structural protein implicated with protein sigma-NS in forming the matrix of viral factories, which are large inclusions in the host cytoplasm where replication intermediates are assembled and viral RNA replication takes place. Together with mu-2, recruits the other core proteins to these factories. In Mammalia (T1L), this protein is Protein mu-NS (M3).